An 839-amino-acid chain; its full sequence is uncharacterized protein (839 aa).

This is an uncharacterized protein from Mycoplasma pneumoniae (strain ATCC 29342 / M129 / Subtype 1) (Mycoplasmoides pneumoniae).